Consider the following 196-residue polypeptide: UPF0056 membrane protein BUsg_434 (196 aa).

A run of 6 helical transmembrane segments spans residues 8–28, 45–65, 71–91, 105–125, 134–154, and 174–194; these read TILL…MTIL, IIAL…LTIL, TVSI…IFPS, FLVP…TLML, MPYL…ILLL, and MGLI…KAWF.

The protein belongs to the UPF0056 (MarC) family.

It is found in the cell membrane. In Buchnera aphidicola subsp. Schizaphis graminum (strain Sg), this protein is UPF0056 membrane protein BUsg_434.